A 355-amino-acid polypeptide reads, in one-letter code: dTDP-D-glucose 4,6-dehydratase (355 aa).

Thr-142 lines the substrate pocket. Asp-143 functions as the Proton donor in the catalytic mechanism. Active-site proton acceptor residues include Glu-144 and Tyr-166.

Belongs to the NAD(P)-dependent epimerase/dehydratase family. dTDP-glucose dehydratase subfamily. The cofactor is NAD(+).

The catalysed reaction is dTDP-alpha-D-glucose = dTDP-4-dehydro-6-deoxy-alpha-D-glucose + H2O. This chain is dTDP-D-glucose 4,6-dehydratase (TGDS), found in Bos taurus (Bovine).